The sequence spans 291 residues: Nucleotide-binding protein MSMEG_3079/MSMEI_3001 (291 aa).

14 to 21 contacts ATP; it reads GLSGAGRG. 65-68 lines the GTP pocket; it reads DVRS.

The protein belongs to the RapZ-like family.

Its function is as follows. Displays ATPase and GTPase activities. The sequence is that of Nucleotide-binding protein MSMEG_3079/MSMEI_3001 from Mycolicibacterium smegmatis (strain ATCC 700084 / mc(2)155) (Mycobacterium smegmatis).